We begin with the raw amino-acid sequence, 133 residues long: Small ribosomal subunit protein eS8 (133 aa).

Residues 1-22 are disordered; the sequence is MGFYQGPDNRKITGGLKGKHRD.

Belongs to the eukaryotic ribosomal protein eS8 family. As to quaternary structure, part of the 30S ribosomal subunit.

The sequence is that of Small ribosomal subunit protein eS8 from Saccharolobus islandicus (strain Y.N.15.51 / Yellowstone #2) (Sulfolobus islandicus).